The chain runs to 523 residues: UDP-glucuronosyltransferase 2B16 (523 aa).

The signal sequence occupies residues 1–16 (LLLLLQLSCCFSSGSC). N6-succinyllysine is present on lysine 129. A glycan (N-linked (GlcNAc...) asparagine) is linked at asparagine 309. Residues 487 to 503 (VIGFLLACLTITTYLVI) traverse the membrane as a helical segment.

This sequence belongs to the UDP-glycosyltransferase family.

The protein localises to the microsome membrane. It localises to the endoplasmic reticulum membrane. It catalyses the reaction glucuronate acceptor + UDP-alpha-D-glucuronate = acceptor beta-D-glucuronoside + UDP + H(+). Its function is as follows. UDPGT is of major importance in the conjugation and subsequent elimination of potentially toxic xenobiotics and endogenous compounds. Acts on small phenolic agents such as 2-beta-naphthol and 4-methylumbelliferone as well as bulky phenolic compounds like 2-hydroxy- and 4-hydroxybiphenyl. In contrast to 2B13 it is active toward 4-hydroxyesterone. This is UDP-glucuronosyltransferase 2B16 (UGT2B16) from Oryctolagus cuniculus (Rabbit).